Here is a 210-residue protein sequence, read N- to C-terminus: Large ribosomal subunit protein bL25 (210 aa).

Residues 179–210 (LPPQQEEEIHSGEQQEPGHPDAEEGRETTPES) are disordered. A compositionally biased stretch (basic and acidic residues) spans 185 to 210 (EEIHSGEQQEPGHPDAEEGRETTPES).

The protein belongs to the bacterial ribosomal protein bL25 family. CTC subfamily. Part of the 50S ribosomal subunit; part of the 5S rRNA/L5/L18/L25 subcomplex. Contacts the 5S rRNA. Binds to the 5S rRNA independently of L5 and L18.

Its function is as follows. This is one of the proteins that binds to the 5S RNA in the ribosome where it forms part of the central protuberance. In Geobacillus sp. (strain WCH70), this protein is Large ribosomal subunit protein bL25.